We begin with the raw amino-acid sequence, 367 residues long: D-alanine--D-alanine ligase (367 aa).

The region spanning 150–357 is the ATP-grasp domain; the sequence is KKLLASAGLP…YPTLLATMVE (208 aa). 178 to 233 provides a ligand contact to ATP; the sequence is RERLGLPVFVKPSRGGSSIGVSRVTAWDELPAAIELARRHDPKVIIEAAVPGRELE. 3 residues coordinate Mg(2+): Asp312, Glu324, and Asn326.

Belongs to the D-alanine--D-alanine ligase family. Mg(2+) serves as cofactor. The cofactor is Mn(2+).

It localises to the cytoplasm. It carries out the reaction 2 D-alanine + ATP = D-alanyl-D-alanine + ADP + phosphate + H(+). Its pathway is cell wall biogenesis; peptidoglycan biosynthesis. In terms of biological role, cell wall formation. The chain is D-alanine--D-alanine ligase from Mycolicibacterium gilvum (strain PYR-GCK) (Mycobacterium gilvum (strain PYR-GCK)).